The primary structure comprises 100 residues: uncharacterized protein (100 aa).

A helical transmembrane segment spans residues 68-88 (VFLFFFTGSSPSFPAALLGLF).

It is found in the membrane. This is an uncharacterized protein from Saccharomyces cerevisiae (strain ATCC 204508 / S288c) (Baker's yeast).